The chain runs to 538 residues: Bifunctional purine biosynthesis protein PurH (538 aa).

An MGS-like domain is found at 8 to 158 (IPAPDLVPVR…KNHAYVAIVT (151 aa)).

Belongs to the PurH family.

The catalysed reaction is (6R)-10-formyltetrahydrofolate + 5-amino-1-(5-phospho-beta-D-ribosyl)imidazole-4-carboxamide = 5-formamido-1-(5-phospho-D-ribosyl)imidazole-4-carboxamide + (6S)-5,6,7,8-tetrahydrofolate. It carries out the reaction IMP + H2O = 5-formamido-1-(5-phospho-D-ribosyl)imidazole-4-carboxamide. Its pathway is purine metabolism; IMP biosynthesis via de novo pathway; 5-formamido-1-(5-phospho-D-ribosyl)imidazole-4-carboxamide from 5-amino-1-(5-phospho-D-ribosyl)imidazole-4-carboxamide (10-formyl THF route): step 1/1. It functions in the pathway purine metabolism; IMP biosynthesis via de novo pathway; IMP from 5-formamido-1-(5-phospho-D-ribosyl)imidazole-4-carboxamide: step 1/1. The polypeptide is Bifunctional purine biosynthesis protein PurH (Mesorhizobium japonicum (strain LMG 29417 / CECT 9101 / MAFF 303099) (Mesorhizobium loti (strain MAFF 303099))).